A 450-amino-acid polypeptide reads, in one-letter code: Phosphoglucosamine mutase (450 aa).

The Phosphoserine intermediate role is filled by Ser103. Residues Ser103, Asp243, Asp245, and Asp247 each contribute to the Mg(2+) site. Ser103 carries the post-translational modification Phosphoserine.

Belongs to the phosphohexose mutase family. Requires Mg(2+) as cofactor. In terms of processing, activated by phosphorylation.

It catalyses the reaction alpha-D-glucosamine 1-phosphate = D-glucosamine 6-phosphate. In terms of biological role, catalyzes the conversion of glucosamine-6-phosphate to glucosamine-1-phosphate. In Lactobacillus delbrueckii subsp. bulgaricus (strain ATCC 11842 / DSM 20081 / BCRC 10696 / JCM 1002 / NBRC 13953 / NCIMB 11778 / NCTC 12712 / WDCM 00102 / Lb 14), this protein is Phosphoglucosamine mutase.